The chain runs to 162 residues: D-beta-D-heptose 1-phosphate adenylyltransferase (162 aa).

The enzyme catalyses D-glycero-beta-D-manno-heptose 1-phosphate + ATP + H(+) = ADP-D-glycero-beta-D-manno-heptose + diphosphate. Its pathway is nucleotide-sugar biosynthesis; ADP-L-glycero-beta-D-manno-heptose biosynthesis; ADP-L-glycero-beta-D-manno-heptose from D-glycero-beta-D-manno-heptose 7-phosphate: step 3/4. It functions in the pathway bacterial outer membrane biogenesis; LPS core biosynthesis. Catalyzes the ADP transfer from ATP to D-glycero-beta-D-manno-heptose 1-phosphate, yielding ADP-D-glycero-beta-D-manno-heptose. Cannot use GTP, UTP, or CTP as substrate. Is not active against the alpha-anomer substrate. Is also able to catalyze the ADP transfer to beta-glucose 1-phosphate in vitro, yielding ADP-beta-glucose. This Bordetella bronchiseptica (strain ATCC BAA-588 / NCTC 13252 / RB50) (Alcaligenes bronchisepticus) protein is D-beta-D-heptose 1-phosphate adenylyltransferase.